We begin with the raw amino-acid sequence, 74 residues long: Small ribosomal subunit protein eS17 (74 aa).

Belongs to the eukaryotic ribosomal protein eS17 family.

The protein is Small ribosomal subunit protein eS17 of Ignicoccus hospitalis (strain KIN4/I / DSM 18386 / JCM 14125).